The primary structure comprises 603 residues: Cell division control protein 48 homolog B (603 aa).

ATP-binding positions include 63 to 70 and 327 to 334; these read GPPGTGKT and GPPGCSKT.

Belongs to the AAA ATPase family.

The protein resides in the nucleus. The protein localises to the cytoplasm. It localises to the cytoskeleton. Its subcellular location is the phragmoplast. Functionally, probably functions in cell division and growth processes. Interacts with certain SNAREs as part of specialized membrane fusion events where vesicles from the same organelle fuse (homotypic fusion). The protein is Cell division control protein 48 homolog B (CDC48B) of Arabidopsis thaliana (Mouse-ear cress).